A 176-amino-acid polypeptide reads, in one-letter code: NADH-quinone oxidoreductase subunit I (176 aa).

4Fe-4S ferredoxin-type domains are found at residues 47-77 (LTRD…MQAA) and 87-116 (AWFR…MTSE). C57, C60, C63, C67, C96, C99, C102, and C106 together coordinate [4Fe-4S] cluster.

Belongs to the complex I 23 kDa subunit family. In terms of assembly, NDH-1 is composed of 14 different subunits. Subunits NuoA, H, J, K, L, M, N constitute the membrane sector of the complex. It depends on [4Fe-4S] cluster as a cofactor.

Its subcellular location is the cell inner membrane. It catalyses the reaction a quinone + NADH + 5 H(+)(in) = a quinol + NAD(+) + 4 H(+)(out). Functionally, NDH-1 shuttles electrons from NADH, via FMN and iron-sulfur (Fe-S) centers, to quinones in the respiratory chain. The immediate electron acceptor for the enzyme in this species is believed to be ubiquinone. Couples the redox reaction to proton translocation (for every two electrons transferred, four hydrogen ions are translocated across the cytoplasmic membrane), and thus conserves the redox energy in a proton gradient. This chain is NADH-quinone oxidoreductase subunit I, found in Syntrophotalea carbinolica (strain DSM 2380 / NBRC 103641 / GraBd1) (Pelobacter carbinolicus).